A 201-amino-acid chain; its full sequence is Small ribosomal subunit protein uS4c (201 aa).

Positions 91-151 (MRLDNIIFQL…TKNPEELRTI (61 aa)) constitute an S4 RNA-binding domain.

It belongs to the universal ribosomal protein uS4 family. As to quaternary structure, part of the 30S ribosomal subunit. Contacts protein S5. The interaction surface between S4 and S5 is involved in control of translational fidelity.

It is found in the plastid. The protein localises to the chloroplast. One of the primary rRNA binding proteins, it binds directly to 16S rRNA where it nucleates assembly of the body of the 30S subunit. In terms of biological role, with S5 and S12 plays an important role in translational accuracy. The protein is Small ribosomal subunit protein uS4c (rps4) of Welwitschia mirabilis (Tree tumbo).